The chain runs to 633 residues: 1-deoxy-D-xylulose-5-phosphate synthase 2 (633 aa).

Residues H73 and 113–115 (SHA) contribute to the thiamine diphosphate site. Position 145 (D145) interacts with Mg(2+). Residues 146-147 (GA), N175, Y286, and E367 each bind thiamine diphosphate. N175 provides a ligand contact to Mg(2+).

The protein belongs to the transketolase family. DXPS subfamily. In terms of assembly, homodimer. The cofactor is Mg(2+). Requires thiamine diphosphate as cofactor.

It carries out the reaction D-glyceraldehyde 3-phosphate + pyruvate + H(+) = 1-deoxy-D-xylulose 5-phosphate + CO2. It participates in metabolic intermediate biosynthesis; 1-deoxy-D-xylulose 5-phosphate biosynthesis; 1-deoxy-D-xylulose 5-phosphate from D-glyceraldehyde 3-phosphate and pyruvate: step 1/1. In terms of biological role, catalyzes the acyloin condensation reaction between C atoms 2 and 3 of pyruvate and glyceraldehyde 3-phosphate to yield 1-deoxy-D-xylulose-5-phosphate (DXP). This is 1-deoxy-D-xylulose-5-phosphate synthase 2 from Kitasatospora griseola (Streptomyces griseolosporeus).